A 573-amino-acid polypeptide reads, in one-letter code: MISNFILFALFIVTIALITKPLGSYIFRVFNNERTYLDWLAKPFQRVYLLVLGESSKKEQTAKAYFFSLVSFSVMAFIFVLVILLLQGILPLNPQEIKGMSFPQALNTAVSFITNTNWQSYSGETDVSYFAQMLALAVQNFVSAAVGLCVAIALIRSVARHETATIGNFWNDLGKGIFWILLPISIVIAIVYIFQGVPQNVMAYLHVHTLAGTEQIIPQGPIASQEAIKSLGTNGGGFFNANSAHPYENPTVITNYIQMVSIFAIAAALTYTFGKWVGNTKQGWLIFGVMLVLFIISLVVMTISELHGLDFLHSKDIQDIYGQVGHLSNMEGKESRFGVFYSTLYNTVSTSASDGGVNSVLDSYSPLAGMMAMLNMAIGEVIFGGVGAGFYGFFMFLMLAVFIGSLMIGRAPSFLGKRIEANDMKWTMFALLISPCCVLVFTGLAAVIPSVHQALTNSGAHGFSEILYAYISGANNNGSAFAGLSANTNYLNITIALSMLIGRFGVIFAVIMLAGSLVKKKRSLQMSEISSLDTTSFIFAILVFFTILLIGGLTIFPALGLGPILDQLNLNFL.

10 helical membrane-spanning segments follow: residues 6–26 (ILFALFIVTIALITKPLGSYI), 66–86 (FFSLVSFSVMAFIFVLVILLL), 135–155 (ALAVQNFVSAAVGLCVAIALI), 177–197 (IFWILLPISIVIAIVYIFQGV), 257–277 (IQMVSIFAIAAALTYTFGKWV), 283–303 (GWLIFGVMLVLFIISLVVMTI), 382–402 (IFGGVGAGFYGFFMFLMLAVF), 428–448 (MFALLISPCCVLVFTGLAAVI), 493–513 (ITIALSMLIGRFGVIFAVIML), and 537–557 (FIFAILVFFTILLIGGLTIFP).

It belongs to the KdpA family. As to quaternary structure, the system is composed of three essential subunits: KdpA, KdpB and KdpC.

Its subcellular location is the cell inner membrane. In terms of biological role, part of the high-affinity ATP-driven potassium transport (or Kdp) system, which catalyzes the hydrolysis of ATP coupled with the electrogenic transport of potassium into the cytoplasm. This subunit binds the periplasmic potassium ions and delivers the ions to the membrane domain of KdpB through an intramembrane tunnel. The protein is Potassium-transporting ATPase potassium-binding subunit of Francisella tularensis subsp. novicida (strain U112).